A 272-amino-acid polypeptide reads, in one-letter code: Ras-related protein RSR1 (272 aa).

Residue 10 to 17 participates in GTP binding; it reads GAGGVGKS. Residues 32–40 carry the Effector region motif; sequence YDPTIEDSY. GTP contacts are provided by residues 57-61 and 116-119; these read DTAGI and NKAD. Positions 177–272 are disordered; sequence DARNQSQQFS…KKNASTCTIL (96 aa). 2 stretches are compositionally biased toward polar residues: residues 180 to 232 and 245 to 258; these read NQSQ…STPV and SGSS…ATSQ. Residue Cys269 is modified to Cysteine methyl ester. Residue Cys269 is the site of S-geranylgeranyl cysteine attachment. The propeptide at 270–272 is removed in mature form; that stretch reads TIL.

It belongs to the small GTPase superfamily. Ras family.

The protein resides in the cell membrane. It catalyses the reaction GTP + H2O = GDP + phosphate + H(+). With respect to regulation, alternates between an inactive form bound to GDP and an active form bound to GTP. Activated by a guanine nucleotide-exchange factor (GEF) and inactivated by a GTPase-activating protein (GAP). Its function is as follows. Ras-related protein which binds GDP/GTP and possesses intrinsic GTPase activity. Involved in development of cell polarity during the cell division cycle, and essential for bud emergence. The protein is Ras-related protein RSR1 of Saccharomyces cerevisiae (strain ATCC 204508 / S288c) (Baker's yeast).